We begin with the raw amino-acid sequence, 180 residues long: UPF0398 protein EF_1150 (180 aa).

The protein belongs to the UPF0398 family.

This chain is UPF0398 protein EF_1150, found in Enterococcus faecalis (strain ATCC 700802 / V583).